A 296-amino-acid chain; its full sequence is Formamidopyrimidine-DNA glycosylase (296 aa).

Proline 2 functions as the Schiff-base intermediate with DNA in the catalytic mechanism. Catalysis depends on glutamate 3, which acts as the Proton donor. Lysine 58 functions as the Proton donor; for beta-elimination activity in the catalytic mechanism. Residues histidine 106, arginine 125, and lysine 167 each coordinate DNA. The FPG-type zinc finger occupies 258 to 294; that stretch reads RVYDRVGLPCSRPGCAGAITRIVQANRSTFFCATCQP. The Proton donor; for delta-elimination activity role is filled by arginine 284.

This sequence belongs to the FPG family. In terms of assembly, monomer. Zn(2+) is required as a cofactor.

The catalysed reaction is Hydrolysis of DNA containing ring-opened 7-methylguanine residues, releasing 2,6-diamino-4-hydroxy-5-(N-methyl)formamidopyrimidine.. It carries out the reaction 2'-deoxyribonucleotide-(2'-deoxyribose 5'-phosphate)-2'-deoxyribonucleotide-DNA = a 3'-end 2'-deoxyribonucleotide-(2,3-dehydro-2,3-deoxyribose 5'-phosphate)-DNA + a 5'-end 5'-phospho-2'-deoxyribonucleoside-DNA + H(+). Functionally, involved in base excision repair of DNA damaged by oxidation or by mutagenic agents. Acts as a DNA glycosylase that recognizes and removes damaged bases. Has a preference for oxidized purines, such as 7,8-dihydro-8-oxoguanine (8-oxoG). Has AP (apurinic/apyrimidinic) lyase activity and introduces nicks in the DNA strand. Cleaves the DNA backbone by beta-delta elimination to generate a single-strand break at the site of the removed base with both 3'- and 5'-phosphates. This is Formamidopyrimidine-DNA glycosylase from Methylobacterium radiotolerans (strain ATCC 27329 / DSM 1819 / JCM 2831 / NBRC 15690 / NCIMB 10815 / 0-1).